The chain runs to 323 residues: DNA repair and recombination protein RadA (323 aa).

Residue 114 to 121 (GEFGSGKT) coordinates ATP.

The protein belongs to the eukaryotic RecA-like protein family.

Functionally, involved in DNA repair and in homologous recombination. Binds and assemble on single-stranded DNA to form a nucleoprotein filament. Hydrolyzes ATP in a ssDNA-dependent manner and promotes DNA strand exchange between homologous DNA molecules. This is DNA repair and recombination protein RadA from Picrophilus torridus (strain ATCC 700027 / DSM 9790 / JCM 10055 / NBRC 100828 / KAW 2/3).